Reading from the N-terminus, the 390-residue chain is Formate-dependent phosphoribosylglycinamide formyltransferase (390 aa).

Residues 18-19 and Glu-78 contribute to the N(1)-(5-phospho-beta-D-ribosyl)glycinamide site; that span reads EL. ATP contacts are provided by residues Arg-110, Lys-151, 156–161, 191–194, and Glu-199; these read SSGKGQ and EEFL. In terms of domain architecture, ATP-grasp spans 115-305; it reads DLASKELNIK…EFELHLRAFL (191 aa). Mg(2+) is bound by residues Glu-264 and Glu-276. N(1)-(5-phospho-beta-D-ribosyl)glycinamide contacts are provided by residues Asp-283, Lys-353, and 360–361; that span reads RR.

Belongs to the PurK/PurT family. Homodimer.

The enzyme catalyses N(1)-(5-phospho-beta-D-ribosyl)glycinamide + formate + ATP = N(2)-formyl-N(1)-(5-phospho-beta-D-ribosyl)glycinamide + ADP + phosphate + H(+). It participates in purine metabolism; IMP biosynthesis via de novo pathway; N(2)-formyl-N(1)-(5-phospho-D-ribosyl)glycinamide from N(1)-(5-phospho-D-ribosyl)glycinamide (formate route): step 1/1. Its function is as follows. Involved in the de novo purine biosynthesis. Catalyzes the transfer of formate to 5-phospho-ribosyl-glycinamide (GAR), producing 5-phospho-ribosyl-N-formylglycinamide (FGAR). Formate is provided by PurU via hydrolysis of 10-formyl-tetrahydrofolate. In Prochlorococcus marinus subsp. pastoris (strain CCMP1986 / NIES-2087 / MED4), this protein is Formate-dependent phosphoribosylglycinamide formyltransferase.